The primary structure comprises 212 residues: Thymidylate kinase (212 aa).

Ala-2 is subject to N-acetylalanine. Residues 16–21 and Arg-97 contribute to the ATP site; that span reads RAGKST. Residues 133 to 157 form an LID region; sequence LQLQLADAAKRGAFGHERYENGAFQ. At Lys-169 the chain carries N6-acetyllysine. Lys-182 and Arg-192 together coordinate ATP.

Belongs to the thymidylate kinase family. In terms of assembly, homodimer. The cofactor is Mg(2+).

It carries out the reaction dTMP + ATP = dTDP + ADP. It functions in the pathway pyrimidine metabolism; dTTP biosynthesis. Catalyzes the phosphorylation of thymidine monophosphate (dTMP) to thymidine diphosphate (dTDP), the immediate precursor for the DNA building block dTTP, with ATP as the preferred phosphoryl donor in the presence of Mg(2+). The chain is Thymidylate kinase (DTYMK) from Homo sapiens (Human).